The sequence spans 462 residues: Chitinase-like mite allergen Der f 18.0101 (462 aa).

Positions 1 to 25 are cleaved as a signal peptide; sequence MTRFSLTVLAVLAACFGSNIRPNVA. The GH18 domain occupies 29 to 378; sequence PKTVCYYESW…HAIQSNYYHG (350 aa). C33 and C58 are joined by a disulfide. N-linked (GlcNAc...) asparagine glycosylation occurs at N338. A Chitin-binding type-2 domain is found at 404–462; it reads VFHCHEEGFFRDKTYCATYYECKKGDFGLEKTVHHCANHLQAFDEVSRTCIDHTKIPGC. C439 and C453 are joined by a disulfide.

Belongs to the glycosyl hydrolase 18 family. Chitinase class II subfamily. As to expression, expressed in the upper digestive tract. Staining is observed in the ventriculus, and in very rare individuals, also in the intestine or esophagus. No expression in fecal pellets neither inside the rectum nor defecated outside of the body.

The protein localises to the secreted. In terms of biological role, probably a non-catalytic chitinase-like protein, which binds to insoluble chitin and enhances the activity of the catalytic chitinases. Has weak chitin-binding activity. The polypeptide is Chitinase-like mite allergen Der f 18.0101 (Dermatophagoides farinae (American house dust mite)).